The chain runs to 482 residues: tRNA sulfurtransferase (482 aa).

One can recognise a THUMP domain in the interval 61-165 (LAIRDALTRI…DDRLLLIKGR (105 aa)). Residues 183–184 (LI), lysine 265, glycine 287, and glutamine 296 contribute to the ATP site. Cysteine 344 and cysteine 456 are disulfide-bonded. One can recognise a Rhodanese domain in the interval 404-482 (FGPNDVILDI…GFQNVKVYRP (79 aa)). Cysteine 456 (cysteine persulfide intermediate) is an active-site residue.

Belongs to the ThiI family.

The protein resides in the cytoplasm. The enzyme catalyses [ThiI sulfur-carrier protein]-S-sulfanyl-L-cysteine + a uridine in tRNA + 2 reduced [2Fe-2S]-[ferredoxin] + ATP + H(+) = [ThiI sulfur-carrier protein]-L-cysteine + a 4-thiouridine in tRNA + 2 oxidized [2Fe-2S]-[ferredoxin] + AMP + diphosphate. It catalyses the reaction [ThiS sulfur-carrier protein]-C-terminal Gly-Gly-AMP + S-sulfanyl-L-cysteinyl-[cysteine desulfurase] + AH2 = [ThiS sulfur-carrier protein]-C-terminal-Gly-aminoethanethioate + L-cysteinyl-[cysteine desulfurase] + A + AMP + 2 H(+). It functions in the pathway cofactor biosynthesis; thiamine diphosphate biosynthesis. In terms of biological role, catalyzes the ATP-dependent transfer of a sulfur to tRNA to produce 4-thiouridine in position 8 of tRNAs, which functions as a near-UV photosensor. Also catalyzes the transfer of sulfur to the sulfur carrier protein ThiS, forming ThiS-thiocarboxylate. This is a step in the synthesis of thiazole, in the thiamine biosynthesis pathway. The sulfur is donated as persulfide by IscS. This is tRNA sulfurtransferase from Citrobacter koseri (strain ATCC BAA-895 / CDC 4225-83 / SGSC4696).